The primary structure comprises 355 residues: Anthranilate phosphoribosyltransferase (355 aa).

5-phospho-alpha-D-ribose 1-diphosphate contacts are provided by residues glycine 91, 94-95 (GD), threonine 99, 101-104 (NIST), 119-127 (KHGNRAMSS), and alanine 131. Position 91 (glycine 91) interacts with anthranilate. Serine 103 serves as a coordination point for Mg(2+). Asparagine 122 is an anthranilate binding site. Anthranilate is bound at residue arginine 177. Residues aspartate 234 and glutamate 235 each contribute to the Mg(2+) site.

This sequence belongs to the anthranilate phosphoribosyltransferase family. As to quaternary structure, homodimer. Requires Mg(2+) as cofactor.

It catalyses the reaction N-(5-phospho-beta-D-ribosyl)anthranilate + diphosphate = 5-phospho-alpha-D-ribose 1-diphosphate + anthranilate. It functions in the pathway amino-acid biosynthesis; L-tryptophan biosynthesis; L-tryptophan from chorismate: step 2/5. In terms of biological role, participates in the tryptophan-dependent indole-3-acetic acid production, which is a phytohormone released by A.brasilense. Its function is as follows. Catalyzes the transfer of the phosphoribosyl group of 5-phosphorylribose-1-pyrophosphate (PRPP) to anthranilate to yield N-(5'-phosphoribosyl)-anthranilate (PRA). The sequence is that of Anthranilate phosphoribosyltransferase from Azospirillum brasilense.